A 198-amino-acid chain; its full sequence is uncharacterized protein (198 aa).

Residues glutamate 11–arginine 71 form the HTH tetR-type domain. The H-T-H motif DNA-binding region spans threonine 34–tryptophan 53.

This is an uncharacterized protein from Bacillus subtilis (strain 168).